The primary structure comprises 216 residues: Ribose-5-phosphate isomerase A (216 aa).

Substrate contacts are provided by residues 26 to 29 (TGST), 79 to 82 (DGAD), and 92 to 95 (KGGG). E101 serves as the catalytic Proton acceptor. K119 contacts substrate.

This sequence belongs to the ribose 5-phosphate isomerase family. Homodimer.

It carries out the reaction aldehydo-D-ribose 5-phosphate = D-ribulose 5-phosphate. It participates in carbohydrate degradation; pentose phosphate pathway; D-ribose 5-phosphate from D-ribulose 5-phosphate (non-oxidative stage): step 1/1. Catalyzes the reversible conversion of ribose-5-phosphate to ribulose 5-phosphate. This Legionella pneumophila subsp. pneumophila (strain Philadelphia 1 / ATCC 33152 / DSM 7513) protein is Ribose-5-phosphate isomerase A.